The sequence spans 99 residues: Malonate decarboxylase acyl carrier protein (99 aa).

The residue at position 25 (Ser-25) is an O-(phosphoribosyl dephospho-coenzyme A)serine.

Belongs to the MdcC family. Post-translationally, covalently binds the prosthetic group of malonate decarboxylase.

The protein localises to the cytoplasm. In terms of biological role, subunit of malonate decarboxylase, it is an acyl carrier protein to which acetyl and malonyl thioester residues are bound via a 2'-(5''-phosphoribosyl)-3'-dephospho-CoA prosthetic group and turn over during the catalytic mechanism. In Pseudomonas putida (strain W619), this protein is Malonate decarboxylase acyl carrier protein.